A 321-amino-acid polypeptide reads, in one-letter code: NADH-ubiquinone oxidoreductase chain 1 (321 aa).

The next 8 membrane-spanning stretches (helical) occupy residues 9 to 29 (ITNS…LTLL), 75 to 95 (ILFT…WAPM), 106 to 126 (LGLL…LWSG), 151 to 171 (TLGL…LMLF), 177 to 197 (HMWL…STLA), 219 to 239 (VEFS…NILF), 256 to 276 (PQLF…LFLW), and 297 to 317 (YLPL…ALCG).

It belongs to the complex I subunit 1 family.

It is found in the mitochondrion inner membrane. The catalysed reaction is a ubiquinone + NADH + 5 H(+)(in) = a ubiquinol + NAD(+) + 4 H(+)(out). In terms of biological role, core subunit of the mitochondrial membrane respiratory chain NADH dehydrogenase (Complex I) that is believed to belong to the minimal assembly required for catalysis. Complex I functions in the transfer of electrons from NADH to the respiratory chain. The immediate electron acceptor for the enzyme is believed to be ubiquinone. The sequence is that of NADH-ubiquinone oxidoreductase chain 1 (MT-ND1) from Lycodon semicarinatus (Ryukyu odd-tooth snake).